The chain runs to 276 residues: Octanoyltransferase LipM (276 aa).

Residues 31-246 form the BPL/LPL catalytic domain; it reads GLIPPVIRFY…GFAKSLQIEL (216 aa). The Acyl-thioester intermediate role is filled by cysteine 148.

This sequence belongs to the octanoyltransferase LipM family. Monomer.

It carries out the reaction octanoyl-[ACP] + L-lysyl-[protein] = N(6)-octanoyl-L-lysyl-[protein] + holo-[ACP] + H(+). The protein operates within protein modification; protein lipoylation via endogenous pathway; protein N(6)-(lipoyl)lysine from octanoyl-[acyl-carrier-protein]. Its function is as follows. Catalyzes the transfer of endogenously produced octanoic acid from octanoyl-acyl-carrier-protein onto the lipoyl domain of GcvH, an intermediate carrier during protein lipoylation. The polypeptide is Octanoyltransferase LipM (Lysinibacillus sphaericus (strain C3-41)).